The following is a 421-amino-acid chain: Tyrosine--tRNA ligase (421 aa).

Y35 contacts L-tyrosine. The 'HIGH' region motif lies at 40-49 (PTGPSLHAGH). Residues Y169 and Q173 each coordinate L-tyrosine. The short motif at 229 to 233 (KFGKS) is the 'KMSKS' region element. K232 lines the ATP pocket. Positions 354–420 (RTIVDLLIAS…GKKNFAGVKI (67 aa)) constitute an S4 RNA-binding domain.

The protein belongs to the class-I aminoacyl-tRNA synthetase family. TyrS type 1 subfamily. In terms of assembly, homodimer.

It is found in the cytoplasm. It catalyses the reaction tRNA(Tyr) + L-tyrosine + ATP = L-tyrosyl-tRNA(Tyr) + AMP + diphosphate + H(+). Catalyzes the attachment of tyrosine to tRNA(Tyr) in a two-step reaction: tyrosine is first activated by ATP to form Tyr-AMP and then transferred to the acceptor end of tRNA(Tyr). This Corynebacterium efficiens (strain DSM 44549 / YS-314 / AJ 12310 / JCM 11189 / NBRC 100395) protein is Tyrosine--tRNA ligase.